The primary structure comprises 447 residues: Asparagine--tRNA ligase (447 aa).

It belongs to the class-II aminoacyl-tRNA synthetase family. As to quaternary structure, homodimer.

It is found in the cytoplasm. It catalyses the reaction tRNA(Asn) + L-asparagine + ATP = L-asparaginyl-tRNA(Asn) + AMP + diphosphate + H(+). The chain is Asparagine--tRNA ligase from Lactococcus lactis subsp. lactis (strain IL1403) (Streptococcus lactis).